The following is a 616-amino-acid chain: Dihydroxy-acid dehydratase (616 aa).

Residue aspartate 81 participates in Mg(2+) binding. Position 122 (cysteine 122) interacts with [2Fe-2S] cluster. Residues aspartate 123 and lysine 124 each coordinate Mg(2+). Position 124 is an N6-carboxylysine (lysine 124). [2Fe-2S] cluster is bound at residue cysteine 195. Position 491 (glutamate 491) interacts with Mg(2+). The active-site Proton acceptor is the serine 517.

It belongs to the IlvD/Edd family. Homodimer. [2Fe-2S] cluster serves as cofactor. It depends on Mg(2+) as a cofactor.

The catalysed reaction is (2R)-2,3-dihydroxy-3-methylbutanoate = 3-methyl-2-oxobutanoate + H2O. The enzyme catalyses (2R,3R)-2,3-dihydroxy-3-methylpentanoate = (S)-3-methyl-2-oxopentanoate + H2O. Its pathway is amino-acid biosynthesis; L-isoleucine biosynthesis; L-isoleucine from 2-oxobutanoate: step 3/4. It participates in amino-acid biosynthesis; L-valine biosynthesis; L-valine from pyruvate: step 3/4. Its function is as follows. Functions in the biosynthesis of branched-chain amino acids. Catalyzes the dehydration of (2R,3R)-2,3-dihydroxy-3-methylpentanoate (2,3-dihydroxy-3-methylvalerate) into 2-oxo-3-methylpentanoate (2-oxo-3-methylvalerate) and of (2R)-2,3-dihydroxy-3-methylbutanoate (2,3-dihydroxyisovalerate) into 2-oxo-3-methylbutanoate (2-oxoisovalerate), the penultimate precursor to L-isoleucine and L-valine, respectively. This is Dihydroxy-acid dehydratase from Escherichia coli O1:K1 / APEC.